Reading from the N-terminus, the 111-residue chain is Probable 4-amino-4-deoxy-L-arabinose-phosphoundecaprenol flippase subunit ArnE (111 aa).

The Cytoplasmic portion of the chain corresponds to 1–35 (MIWLTLVFASLLSVAGQLCQKQATCFATVNKRRKH). The chain crosses the membrane as a helical span at residues 36–56 (IVLWLGLALACLGLAMVLWLL). Residues 40-109 (LGLALACLGL…IIGGIVILGS (70 aa)) enclose the EamA domain. At 57 to 60 (VLQN) the chain is on the periplasmic side. The chain crosses the membrane as a helical span at residues 61–81 (VPVGIAYPMLSLNFVWVTLAA). Over 82–87 (VKLWHE) the chain is Cytoplasmic. Residues 88-108 (PVSLRHWCGVAFIIGGIVILG) traverse the membrane as a helical segment. Residues 109 to 111 (STV) are Periplasmic-facing.

Belongs to the ArnE family. Heterodimer of ArnE and ArnF.

The protein resides in the cell inner membrane. It participates in bacterial outer membrane biogenesis; lipopolysaccharide biosynthesis. Translocates 4-amino-4-deoxy-L-arabinose-phosphoundecaprenol (alpha-L-Ara4N-phosphoundecaprenol) from the cytoplasmic to the periplasmic side of the inner membrane. This is Probable 4-amino-4-deoxy-L-arabinose-phosphoundecaprenol flippase subunit ArnE from Escherichia coli O6:H1 (strain CFT073 / ATCC 700928 / UPEC).